A 369-amino-acid chain; its full sequence is Queuine tRNA-ribosyltransferase (369 aa).

Asp90 functions as the Proton acceptor in the catalytic mechanism. Residues Asp90 to Phe94, Asp144, Gln186, and Gly213 each bind substrate. Positions Gly244–Asp250 are RNA binding. Asp263 (nucleophile) is an active-site residue. Zn(2+) contacts are provided by Cys301, Cys303, Cys306, and His332.

It belongs to the queuine tRNA-ribosyltransferase family. In terms of assembly, homodimer. Within each dimer, one monomer is responsible for RNA recognition and catalysis, while the other monomer binds to the replacement base PreQ1. It depends on Zn(2+) as a cofactor.

It carries out the reaction 7-aminomethyl-7-carbaguanine + guanosine(34) in tRNA = 7-aminomethyl-7-carbaguanosine(34) in tRNA + guanine. Its pathway is tRNA modification; tRNA-queuosine biosynthesis. Its function is as follows. Catalyzes the base-exchange of a guanine (G) residue with the queuine precursor 7-aminomethyl-7-deazaguanine (PreQ1) at position 34 (anticodon wobble position) in tRNAs with GU(N) anticodons (tRNA-Asp, -Asn, -His and -Tyr). Catalysis occurs through a double-displacement mechanism. The nucleophile active site attacks the C1' of nucleotide 34 to detach the guanine base from the RNA, forming a covalent enzyme-RNA intermediate. The proton acceptor active site deprotonates the incoming PreQ1, allowing a nucleophilic attack on the C1' of the ribose to form the product. After dissociation, two additional enzymatic reactions on the tRNA convert PreQ1 to queuine (Q), resulting in the hypermodified nucleoside queuosine (7-(((4,5-cis-dihydroxy-2-cyclopenten-1-yl)amino)methyl)-7-deazaguanosine). This chain is Queuine tRNA-ribosyltransferase, found in Dichelobacter nodosus (strain VCS1703A).